The chain runs to 740 residues: Ribosomal protein S6 kinase alpha-3 (740 aa).

The interval 1–26 (MPLAQLADPWQKMAVESPSDSAENGQ) is disordered. The Protein kinase 1 domain maps to 68 to 327 (FELLKVLGQG…VEEIKRHSFF (260 aa)). ATP contacts are provided by residues 74-82 (LGQGSFGKV) and lysine 100. The active-site Proton acceptor is the aspartate 193. Position 227 is a phosphoserine; by PDPK1 (serine 227). The 70-residue stretch at 328 to 397 (STIDWNKLYR…VAITSDDESQ (70 aa)) folds into the AGC-kinase C-terminal domain. Position 365 is a phosphothreonine (threonine 365). Residues serine 369 and serine 375 each carry the phosphoserine modification. At serine 386 the chain carries Phosphoserine; by autocatalysis and MAPKAPK2. Serine 415 is subject to Phosphoserine. Residues 422-679 (YEVKEDIGVG…AALVLRHPWI (258 aa)) enclose the Protein kinase 2 domain. Residues 428-436 (IGVGSYSVC) and lysine 451 contribute to the ATP site. A Phosphotyrosine; by FGFR3 modification is found at tyrosine 529. The active-site Proton acceptor is aspartate 539. Phosphoserine occurs at positions 556 and 715.

It belongs to the protein kinase superfamily. AGC Ser/Thr protein kinase family. S6 kinase subfamily. Forms a complex with either MAPK1/ERK2 or MAPK3/ERK1 in quiescent cells. Transiently dissociates following mitogenic stimulation. Interacts with NFATC4, ETV1/ER81 and FGFR1. Mg(2+) is required as a cofactor. In terms of processing, activated by phosphorylation at Ser-227 by PDPK1. Autophosphorylated on Ser-386, as part of the activation process. May be phosphorylated at Thr-365 and Ser-369 by MAPK1/ERK2 and MAPK3/ERK1. Can also be activated via phosphorylation at Ser-386 by MAPKAPK2. N-terminal myristoylation results in an activated kinase in the absence of added growth factors. In terms of tissue distribution, intestine, thymus, lung, heart and brain.

It localises to the nucleus. The protein resides in the cytoplasm. It carries out the reaction L-seryl-[protein] + ATP = O-phospho-L-seryl-[protein] + ADP + H(+). The enzyme catalyses L-threonyl-[protein] + ATP = O-phospho-L-threonyl-[protein] + ADP + H(+). Its activity is regulated as follows. Upon extracellular signal or mitogen stimulation, phosphorylated at Thr-577 in the C-terminal kinase domain (CTKD) by MAPK1/ERK2 and MAPK3/ERK1. The activated CTKD then autophosphorylates Ser-386, allowing binding of PDPK1, which in turn phosphorylates Ser-227 in the N-terminal kinase domain (NTDK) leading to the full activation of the protein and subsequent phosphorylation of the substrates by the NTKD. Functionally, serine/threonine-protein kinase that acts downstream of ERK (MAPK1/ERK2 and MAPK3/ERK1) signaling and mediates mitogenic and stress-induced activation of the transcription factors CREB1, ETV1/ER81 and NR4A1/NUR77, regulates translation through RPS6 and EIF4B phosphorylation, and mediates cellular proliferation, survival, and differentiation by modulating mTOR signaling and repressing pro-apoptotic function of BAD and DAPK1. In fibroblast, is required for EGF-stimulated phosphorylation of CREB1 and histone H3 at 'Ser-10', which results in the subsequent transcriptional activation of several immediate-early genes. In response to mitogenic stimulation (EGF and PMA), phosphorylates and activates NR4A1/NUR77 and ETV1/ER81 transcription factors and the cofactor CREBBP. Upon insulin-derived signal, acts indirectly on the transcription regulation of several genes by phosphorylating GSK3B at 'Ser-9' and inhibiting its activity. Phosphorylates RPS6 in response to serum or EGF via an mTOR-independent mechanism and promotes translation initiation by facilitating assembly of the preinitiation complex. In response to insulin, phosphorylates EIF4B, enhancing EIF4B affinity for the EIF3 complex and stimulating cap-dependent translation. Is involved in the mTOR nutrient-sensing pathway by directly phosphorylating TSC2 at 'Ser-1798', which potently inhibits TSC2 ability to suppress mTOR signaling, and mediates phosphorylation of RPTOR, which regulates mTORC1 activity and may promote rapamycin-sensitive signaling independently of the PI3K/AKT pathway. Mediates cell survival by phosphorylating the pro-apoptotic proteins BAD and DAPK1 and suppressing their pro-apoptotic function. Promotes the survival of hepatic stellate cells by phosphorylating CEBPB in response to the hepatotoxin carbon tetrachloride (CCl4). Is involved in cell cycle regulation by phosphorylating the CDK inhibitor CDKN1B, which promotes CDKN1B association with 14-3-3 proteins and prevents its translocation to the nucleus and inhibition of G1 progression. In LPS-stimulated dendritic cells, is involved in TLR4-induced macropinocytosis, and in myeloma cells, acts as effector of FGFR3-mediated transformation signaling, after direct phosphorylation at Tyr-529 by FGFR3. Negatively regulates EGF-induced MAPK1/3 phosphorylation via phosphorylation of SOS1. Phosphorylates SOS1 at 'Ser-1134' and 'Ser-1161' that create YWHAB and YWHAE binding sites and which contribute to the negative regulation of MAPK1/3 phosphorylation. Phosphorylates EPHA2 at 'Ser-897', the RPS6KA-EPHA2 signaling pathway controls cell migration. Acts as a regulator of osteoblast differentiation by mediating phosphorylation of ATF4, thereby promoting ATF4 transactivation activity. In Mus musculus (Mouse), this protein is Ribosomal protein S6 kinase alpha-3 (Rps6ka3).